A 1452-amino-acid polypeptide reads, in one-letter code: ABC multidrug transporter A (1452 aa).

Positions 1-20 are disordered; that stretch reads MNESHEAGKNSSTNVEEREE. N-linked (GlcNAc...) asparagine glycosylation is found at Asn2, Asn10, Asn228, Asn287, and Asn311. The region spanning 110–363 is the ABC transporter 1 domain; that stretch reads LKTLSLARIA…FLQMGFVCPD (254 aa). The next 6 helical transmembrane spans lie at 474 to 494, 508 to 528, 554 to 574, 583 to 603, 616 to 636, and 725 to 745; these read VTIS…SIFY, ALLF…MLTL, MIMD…VLYF, GAFF…SMFF, VLPF…FAIP, and IGVI…ATDF. Residues 802–1044 enclose the ABC transporter 2 domain; sequence FQWKDVCFDI…ILIDYFVRNG (243 aa). 838 to 845 is a binding site for ATP; sequence GVSGAGKT. 5 helical membrane-spanning segments follow: residues 1153-1173, 1183-1203, 1223-1243, 1271-1291, and 1297-1317; these read ALCV…PNTI, IFML…HFVA, FLIA…VLMF, LMIW…IAAF, and AGNL…VLAT. Residues Asn1350, Asn1365, and Asn1391 are each glycosylated (N-linked (GlcNAc...) asparagine). A helical transmembrane segment spans residues 1418-1438; it reads FGLMWVFIVFNIFAACSLYWW.

Belongs to the ABC transporter superfamily. ABCG family. PDR (TC 3.A.1.205) subfamily.

The protein resides in the membrane. In terms of biological role, ABC transporter that seems not to be involved in the efflux of toxic substances, at least not the classical compounds such as itraconazole, amphotericin B, voriconazole, posaconazole, ravuconazole, or echinocandins. The sequence is that of ABC multidrug transporter A from Aspergillus fumigatus (Neosartorya fumigata).